A 212-amino-acid polypeptide reads, in one-letter code: Ribonuclease HII (212 aa).

An RNase H type-2 domain is found at isoleucine 22–leucine 212. 3 residues coordinate a divalent metal cation: aspartate 28, glutamate 29, and aspartate 123.

This sequence belongs to the RNase HII family. Mn(2+) serves as cofactor. Mg(2+) is required as a cofactor.

It localises to the cytoplasm. It catalyses the reaction Endonucleolytic cleavage to 5'-phosphomonoester.. Endonuclease that specifically degrades the RNA of RNA-DNA hybrids. This chain is Ribonuclease HII, found in Dehalococcoides mccartyi (strain ATCC BAA-2100 / JCM 16839 / KCTC 5957 / BAV1).